We begin with the raw amino-acid sequence, 186 residues long: Casparian strip membrane protein 5 (186 aa).

Topologically, residues Met1–Ser25 are cytoplasmic. A helical membrane pass occupies residues Ile26–Met46. Topologically, residues Gly47 to Thr73 are extracellular. A glycan (N-linked (GlcNAc...) asparagine) is linked at Asn50. A helical transmembrane segment spans residues Phe74–Ile94. Residues Val95–Arg106 lie on the Cytoplasmic side of the membrane. A helical transmembrane segment spans residues Ile107 to Ala127. The Extracellular segment spans residues Ala128–Arg156. The helical transmembrane segment at Ile157–Met177 threads the bilayer. At Ser178–Asn186 the chain is on the cytoplasmic side.

This sequence belongs to the Casparian strip membrane proteins (CASP) family. Homodimer and heterodimers.

It localises to the cell membrane. Functionally, regulates membrane-cell wall junctions and localized cell wall deposition. Required for establishment of the Casparian strip membrane domain (CSD) and the subsequent formation of Casparian strips, a cell wall modification of the root endodermis that determines an apoplastic barrier between the intraorganismal apoplasm and the extraorganismal apoplasm and prevents lateral diffusion. This is Casparian strip membrane protein 5 from Ricinus communis (Castor bean).